Reading from the N-terminus, the 227-residue chain is Enolase-phosphatase E1 (227 aa).

Belongs to the HAD-like hydrolase superfamily. MasA/MtnC family. In terms of assembly, monomer. It depends on Mg(2+) as a cofactor.

It carries out the reaction 5-methylsulfanyl-2,3-dioxopentyl phosphate + H2O = 1,2-dihydroxy-5-(methylsulfanyl)pent-1-en-3-one + phosphate. It functions in the pathway amino-acid biosynthesis; L-methionine biosynthesis via salvage pathway; L-methionine from S-methyl-5-thio-alpha-D-ribose 1-phosphate: step 3/6. Its pathway is amino-acid biosynthesis; L-methionine biosynthesis via salvage pathway; L-methionine from S-methyl-5-thio-alpha-D-ribose 1-phosphate: step 4/6. Its function is as follows. Bifunctional enzyme that catalyzes the enolization of 2,3-diketo-5-methylthiopentyl-1-phosphate (DK-MTP-1-P) into the intermediate 2-hydroxy-3-keto-5-methylthiopentenyl-1-phosphate (HK-MTPenyl-1-P), which is then dephosphorylated to form the acireductone 1,2-dihydroxy-3-keto-5-methylthiopentene (DHK-MTPene). The chain is Enolase-phosphatase E1 from Persephonella marina (strain DSM 14350 / EX-H1).